The following is a 485-amino-acid chain: Glutamyl-tRNA(Gln) amidotransferase subunit A (485 aa).

Active-site charge relay system residues include Lys-79 and Ser-154. The active-site Acyl-ester intermediate is the Ser-178.

It belongs to the amidase family. GatA subfamily. Heterotrimer of A, B and C subunits.

It catalyses the reaction L-glutamyl-tRNA(Gln) + L-glutamine + ATP + H2O = L-glutaminyl-tRNA(Gln) + L-glutamate + ADP + phosphate + H(+). Its function is as follows. Allows the formation of correctly charged Gln-tRNA(Gln) through the transamidation of misacylated Glu-tRNA(Gln) in organisms which lack glutaminyl-tRNA synthetase. The reaction takes place in the presence of glutamine and ATP through an activated gamma-phospho-Glu-tRNA(Gln). The protein is Glutamyl-tRNA(Gln) amidotransferase subunit A of Staphylococcus aureus (strain Mu3 / ATCC 700698).